The following is a 205-amino-acid chain: MASDHQTQAGKPQPLNPKIIIFEQENFQGHSHELNGPCPNLKETGVEKAGSVLVQAGPWVGYEQANCKGEQFVFEKGEYPRWDSWTSSRRTDSLSSLRPIKVDSQEHKIILYENPNFTGKKMEIIDDDVPSFHAHGYQEKVSSVRVQSGTWVGYQYPGYRGLQYLLEKGDYKDSSDFGAPHPQVQSVRRIRDMQWHQRGAFHPTN.

N-acetylalanine is present on alanine 2. Positions 2–16 (ASDHQTQAGKPQPLN) are N-terminal arm. 2 consecutive Beta/gamma crystallin 'Greek key' domains span residues 17–56 (PKII…LVQA) and 57–101 (GPWV…RPIK). The connecting peptide stretch occupies residues 102-106 (VDSQE). 2 consecutive Beta/gamma crystallin 'Greek key' domains span residues 107–148 (HKII…RVQS) and 149–191 (GTWV…RRIR). The segment at 193–205 (MQWHQRGAFHPTN) is C-terminal arm.

This sequence belongs to the beta/gamma-crystallin family. As to quaternary structure, homo/heterodimer, or complexes of higher-order. The structure of beta-crystallin oligomers seems to be stabilized through interactions between the N-terminal arms.

Its function is as follows. Crystallins are the dominant structural components of the vertebrate eye lens. This is Beta-crystallin B2 (CRYBB2) from Oryctolagus cuniculus (Rabbit).